The following is a 344-amino-acid chain: Lipase chaperone (344 aa).

The helical transmembrane segment at 14-34 (VAVYGAVGLAAIAGVAIWSGA) threads the bilayer.

The protein belongs to the lipase chaperone family.

Its subcellular location is the cell inner membrane. Functionally, may be involved in the folding of the extracellular lipase during its passage through the periplasm. This chain is Lipase chaperone, found in Burkholderia ambifaria (strain MC40-6).